Reading from the N-terminus, the 120-residue chain is NAD(P)H-quinone oxidoreductase subunit 3, chloroplastic (120 aa).

The next 3 membrane-spanning stretches (helical) occupy residues 9–29 (IFWAFLLISSVIPILAFLISG), 64–84 (MFALVFVVFDVETVFLYPWAM), and 88–108 (VLGVSVFLEALIFVLILIVGS).

The protein belongs to the complex I subunit 3 family. In terms of assembly, NDH is composed of at least 16 different subunits, 5 of which are encoded in the nucleus.

It is found in the plastid. It localises to the chloroplast thylakoid membrane. It catalyses the reaction a plastoquinone + NADH + (n+1) H(+)(in) = a plastoquinol + NAD(+) + n H(+)(out). The catalysed reaction is a plastoquinone + NADPH + (n+1) H(+)(in) = a plastoquinol + NADP(+) + n H(+)(out). In terms of biological role, NDH shuttles electrons from NAD(P)H:plastoquinone, via FMN and iron-sulfur (Fe-S) centers, to quinones in the photosynthetic chain and possibly in a chloroplast respiratory chain. The immediate electron acceptor for the enzyme in this species is believed to be plastoquinone. Couples the redox reaction to proton translocation, and thus conserves the redox energy in a proton gradient. The sequence is that of NAD(P)H-quinone oxidoreductase subunit 3, chloroplastic from Acorus calamus var. americanus (American sweet flag).